We begin with the raw amino-acid sequence, 343 residues long: MDQGQTLSVLLDSYAVDPQKKAVAAAVGAIAAGSIEISELIGQGALAGITGAAHGGSNADGDVQKDLDVKAEQIIVKSLKDVPYAALASEESDTLLDGDPNAPISIAYDPLDGSSNIDTNMTVGTIFSIIPNQPGVKPFTAAGSCQIAAGFVVYGPQTSLVLTLGDGVNIFTLDRKAKVYRLIRERVKVPADTAEYAVNASNHRHWEQPIRDFVDECIAGADGPRAKDFNMRWIGSLVAEVYRILTRGGVFLYPGDNRPGYGNGRLRLLYETHPMSFVMEQAGGAASTGRERVLDLTAKTIHQRSPLIMGSIDKVKRIELLHTDPSAASRSAPLFARRGLFRV.

Residues glutamate 90, aspartate 109, leucine 111, and aspartate 112 each contribute to the Mg(2+) site. Substrate is bound by residues aspartate 112–serine 115 and asparagine 199. Residue glutamate 271 participates in Mg(2+) binding.

The protein belongs to the FBPase class 1 family. Homotetramer. Requires Mg(2+) as cofactor.

The protein resides in the cytoplasm. It catalyses the reaction beta-D-fructose 1,6-bisphosphate + H2O = beta-D-fructose 6-phosphate + phosphate. Its pathway is carbohydrate biosynthesis; Calvin cycle. This chain is Fructose-1,6-bisphosphatase class 1, found in Rhodopseudomonas palustris (strain ATCC BAA-98 / CGA009).